Reading from the N-terminus, the 335-residue chain is Proline-rich protein 1 (335 aa).

The signal sequence occupies residues 1–22 (MAITRASFAICILLSLATIATA). A run of 39 repeats spans residues 30–34 (PPVYT), 35–39 (SPVNK), 40–43 (PTLP), 44–48 (PPVYT), 49–53 (PPVHK), 54–57 (PTLP), 58–62 (PPVYT), 63–67 (PPVHK), 68–71 (PTLS), 72–76 (PPVYT), 77–81 (KPTLP), 82–86 (PPAYT), 87–91 (PPVYN), 92–96 (KPTLP), 97–101 (APVYT), 102–106 (PPVYK), 107–110 (PTLS), 111–115 (PPVYT), 116–120 (KPTLL), 121–125 (PPVFK), 126–130 (PTLSP), 131–135 (PVYTK), 136–139 (PTLS), 140–144 (PTVYK), 145–148 (PTLS), 149–153 (PPVNN), 154–158 (KPSLS), 159–163 (PPVYK), 164–167 (PTLS), 168–172 (PPVYT), 173–177 (KPTLP), 178–182 (PPVYK), 184–189 (SPSYSP), 190–194 (PPPFA), 195–200 (PKPTYT), 201–207 (PPTKPYV), 208–212 (PEIIK), 284–288 (SPVET), and 319–323 (PFYFT). Positions 30-323 (PPVYTSPVNK…LFNVGPFYFT (294 aa)) are 39 X 5 AA approximate repeats.

It belongs to the plant proline-rich protein superfamily. ENOD12 family. Exclusively expressed in roots, especially in root hairs.

The protein localises to the secreted. The protein resides in the cell wall. In terms of biological role, may contribute to cell wall structure in root hairs. This Arabidopsis thaliana (Mouse-ear cress) protein is Proline-rich protein 1 (PRP1).